A 652-amino-acid polypeptide reads, in one-letter code: Bifunctional protein ThiO/ThiG (652 aa).

Residues 1 to 366 are thiO; sequence MTRDIVIIGG…HYSRSQKQAS (366 aa). Residues 5 to 19 and 44 to 46 contribute to the FAD site; these read IVII…AIAV and AGM. Glu52 is a glycine binding site. Residue Val173 participates in FAD binding. Arg301 and Arg327 together coordinate glycine. 325-331 is an FAD binding site; it reads HYRNGIL. Positions 393-652 are thiG; it reads PLIIAGKSFH…ASSPVTGTIS (260 aa). Lys494 (schiff-base intermediate with DXP) is an active-site residue. Residues Gly555, 581–582, and 603–604 each bind 1-deoxy-D-xylulose 5-phosphate; these read AG and NS.

This sequence in the N-terminal section; belongs to the DAO family. ThiO subfamily. In the C-terminal section; belongs to the ThiG family. As to quaternary structure, interacts with ThiH and ThiS. FAD serves as cofactor.

Its subcellular location is the cytoplasm. The catalysed reaction is glycine + O2 + H2O = glyoxylate + H2O2 + NH4(+). It carries out the reaction [ThiS sulfur-carrier protein]-C-terminal-Gly-aminoethanethioate + 2-iminoacetate + 1-deoxy-D-xylulose 5-phosphate = [ThiS sulfur-carrier protein]-C-terminal Gly-Gly + 2-[(2R,5Z)-2-carboxy-4-methylthiazol-5(2H)-ylidene]ethyl phosphate + 2 H2O + H(+). It functions in the pathway cofactor biosynthesis; thiamine diphosphate biosynthesis. In terms of biological role, catalyzes the FAD-dependent oxidative deamination of glycine. Is essential for thiamine biosynthesis since the oxidation of glycine catalyzed by ThiO generates the glycine imine intermediate (dehydroglycine) required for the biosynthesis of the thiazole ring of thiamine pyrophosphate. Its function is as follows. Catalyzes the rearrangement of 1-deoxy-D-xylulose 5-phosphate (DXP) to produce the thiazole phosphate moiety of thiamine. Sulfur is provided by the thiocarboxylate moiety of the carrier protein ThiS. In vitro, sulfur can be provided by H(2)S. In Nostoc sp. (strain PCC 7120 / SAG 25.82 / UTEX 2576), this protein is Bifunctional protein ThiO/ThiG (thiO/thiG).